The sequence spans 145 residues: RxLR effector protein BLR40 (145 aa).

The N-terminal stretch at 1-22 is a signal peptide; sequence MLLSRAISVVALLACICCGVHT. The RxLR-dEER signature appears at 44–58; that stretch reads RRLRTSVDLVDNEER.

Belongs to the RxLR effector family.

The protein localises to the secreted. It localises to the host cell membrane. Functionally, secreted effector that triggers a robust hypersensitive response (HR) in Lactuca sativa cv. Design that is resistant to multiple B.lactucae races, including Bl:24. The polypeptide is RxLR effector protein BLR40 (Bremia lactucae (Lettuce downy mildew)).